A 108-amino-acid chain; its full sequence is ATP-dependent Clp protease adapter protein ClpS (108 aa).

A compositionally biased stretch (basic and acidic residues) spans 1–10 (MADSDKHGDE). The interval 1–21 (MADSDKHGDEGPSTGVVVKAK) is disordered.

The protein belongs to the ClpS family. As to quaternary structure, binds to the N-terminal domain of the chaperone ClpA.

In terms of biological role, involved in the modulation of the specificity of the ClpAP-mediated ATP-dependent protein degradation. The chain is ATP-dependent Clp protease adapter protein ClpS from Rhodospirillum centenum (strain ATCC 51521 / SW).